We begin with the raw amino-acid sequence, 247 residues long: MKKLIVLALVVSVAVAGGWLWMKSGNPDALRHIVLEQCLVNQQQHRNPAPCAQVKPDAGYVVFKDRNGPLQYLLMPTYRINGTESPLLTEPQTPNFFWLAWQSRNFMSMKRGTEVPDSAIALTINSPTGRTQNHFHIHISCLRPDVREKLDANQGQISTQWLPFPGGLEGHEYLARRVTEAELVKRSPFMMLAQELPQAREHMGRFAMAMAQQSDGSFVLLATERNLLVLNRASAEELQDHQCDILN.

The chain crosses the membrane as a helical span at residues 5-22 (IVLALVVSVAVAGGWLWM).

The protein belongs to the Cdh family.

The protein localises to the cell inner membrane. It carries out the reaction a CDP-1,2-diacyl-sn-glycerol + H2O = a 1,2-diacyl-sn-glycero-3-phosphate + CMP + 2 H(+). It participates in phospholipid metabolism; CDP-diacylglycerol degradation; phosphatidate from CDP-diacylglycerol: step 1/1. The protein is CDP-diacylglycerol pyrophosphatase of Enterobacter sp. (strain 638).